The primary structure comprises 406 residues: Phosphopentomutase (406 aa).

Mn(2+)-binding residues include Asp10, Asp305, His310, Asp346, His347, and His358.

Belongs to the phosphopentomutase family. Mn(2+) serves as cofactor.

The protein localises to the cytoplasm. It carries out the reaction 2-deoxy-alpha-D-ribose 1-phosphate = 2-deoxy-D-ribose 5-phosphate. The enzyme catalyses alpha-D-ribose 1-phosphate = D-ribose 5-phosphate. It functions in the pathway carbohydrate degradation; 2-deoxy-D-ribose 1-phosphate degradation; D-glyceraldehyde 3-phosphate and acetaldehyde from 2-deoxy-alpha-D-ribose 1-phosphate: step 1/2. In terms of biological role, isomerase that catalyzes the conversion of deoxy-ribose 1-phosphate (dRib-1-P) and ribose 1-phosphate (Rib-1-P) to deoxy-ribose 5-phosphate (dRib-5-P) and ribose 5-phosphate (Rib-5-P), respectively. This chain is Phosphopentomutase, found in Methylorubrum extorquens (strain PA1) (Methylobacterium extorquens).